The primary structure comprises 466 residues: Asparagine--tRNA ligase (466 aa).

Belongs to the class-II aminoacyl-tRNA synthetase family. Homodimer.

Its subcellular location is the cytoplasm. It carries out the reaction tRNA(Asn) + L-asparagine + ATP = L-asparaginyl-tRNA(Asn) + AMP + diphosphate + H(+). The protein is Asparagine--tRNA ligase of Xylella fastidiosa (strain 9a5c).